A 266-amino-acid polypeptide reads, in one-letter code: DNA damage-regulated autophagy modulator protein 2 (266 aa).

The next 6 helical transmembrane spans lie at 8–28 (LSFL…FSYI), 53–73 (KCLF…TIYV), 88–108 (IIKL…GLSI), 118–138 (FAAH…YMFV), 160–180 (LLLV…SSVL), and 207–227 (ITTA…LTYI).

Belongs to the DRAM/TMEM150 family. In terms of tissue distribution, expression is down-regulated in ovarian tumors (at protein level). Widely expressed with highest levels in placenta and heart. Expressed in the retina. Not detected in brain or thymus.

It is found in the lysosome membrane. It localises to the photoreceptor inner segment. The protein resides in the apical cell membrane. Functionally, plays a role in the initiation of autophagy. In the retina, might be involved in the process of photoreceptor cells renewal and recycling to preserve visual function. Induces apoptotic cell death when coexpressed with DRAM1. In Homo sapiens (Human), this protein is DNA damage-regulated autophagy modulator protein 2 (DRAM2).